The primary structure comprises 147 residues: Large ribosomal subunit protein uL13 (147 aa).

It belongs to the universal ribosomal protein uL13 family. In terms of assembly, part of the 50S ribosomal subunit.

Functionally, this protein is one of the early assembly proteins of the 50S ribosomal subunit, although it is not seen to bind rRNA by itself. It is important during the early stages of 50S assembly. This is Large ribosomal subunit protein uL13 from Leuconostoc citreum (strain KM20).